The chain runs to 375 residues: Neuropeptide Y receptor type 4-2 (375 aa).

Residues 1–39 (MNTSHLLALLLPKSPQGENRSKPLGTPYNFSEHCQDSVD) lie on the Extracellular side of the membrane. 3 N-linked (GlcNAc...) asparagine glycosylation sites follow: Asn2, Asn19, and Asn29. The chain crosses the membrane as a helical span at residues 40–60 (VMVFIVTSYSIETVVGVLGNL). Over 61 to 87 (CLMCVTVRQKEKANVTNLLIANLAFSD) the chain is Cytoplasmic. The helical transmembrane segment at 88 to 108 (FLMCLLCQPLTAVYTIMDYWI) threads the bilayer. Over 109–116 (FGETLCKM) the chain is Extracellular. A disulfide bridge connects residues Cys114 and Cys201. The helical transmembrane segment at 117-137 (SAFIQCMSVTVSILSLVLVAL) threads the bilayer. Over 138-155 (ERHQLIINPTGWKPSISQ) the chain is Cytoplasmic. A helical membrane pass occupies residues 156–176 (AYLGIVLIWVIACVLSLPFLA). The Extracellular portion of the chain corresponds to 177–212 (NSILENVFHKNHSKALEFLADKVVCTESWPLAHHRT). An N-linked (GlcNAc...) asparagine glycan is attached at Asn187. The chain crosses the membrane as a helical span at residues 213-233 (IYTTFLLLFQYCLPLGFILVC). At 234 to 263 (YARIYRRLQRQGRVFHKGTYSLRAGHMKQV) the chain is on the cytoplasmic side. A helical transmembrane segment spans residues 264–284 (NVVLVVMVVAFAVLWLPLHVF). At 285–301 (NSLEDWHHEAIPICHGN) the chain is on the extracellular side. The helical transmembrane segment at 302–322 (LIFLVCHLLAMASTCVNPFIY) threads the bilayer. The Cytoplasmic portion of the chain corresponds to 323–375 (GFLNTNFKKEIKALVLTCQQSAPLEESEHLPLSTVHTEVSKGSLRLSGRSNPI). The S-palmitoyl cysteine moiety is linked to residue Cys340.

It belongs to the G-protein coupled receptor 1 family.

The protein localises to the cell membrane. In terms of biological role, g protein-coupled receptor for PPY/pancreatic polypeptide/PP, NPY/neuropeptide Y and PYY/peptide YY that is negatively coupled to cAMP. The rank order of affinity for these polypeptides and their derivatives is PP, PP (2-36) and [Ile-31, Gln-34] PP &gt; [Pro-34] PYY &gt; PYY and [Leu-31, Pro-34] NPY &gt; NPY &gt; PYY (3-36) and NPY (2-36) &gt; PP (13-36) &gt; PP (31-36) &gt; NPY free acid. This chain is Neuropeptide Y receptor type 4-2, found in Homo sapiens (Human).